The following is a 256-amino-acid chain: CD209 antigen-like protein 2 (256 aa).

Residues 1–50 (MSDSKEPRAQPLGLLEEEELITSSMNFFPRDFGFRQTRGYKSLAGCLGHA) lie on the Cytoplasmic side of the membrane. An Endocytosis signal motif is present at residues 14-15 (LL). The chain crosses the membrane as a helical; Signal-anchor for type II membrane protein span at residues 51–71 (PLVLPLLFFTLFTGLLVAILV). Residues 72–240 (QVSKNPSSQR…KSAASCSRDE (169 aa)) are Extracellular-facing. 3 disulfide bridges follow: Cys108/Cys119, Cys136/Cys229, and Cys208/Cys221. The C-type lectin domain occupies 114 to 230 (FFQGNCYFIS…CSAAKFWICK (117 aa)). Ca(2+) contacts are provided by Glu199, Asn201, Ile203, Glu206, Asn217, and Asp218.

Predominantly expressed in liver and axillary lymph nodes. At very low levels also found in other tissues.

Its subcellular location is the membrane. Its function is as follows. Probable pathogen-recognition receptor involved in peripheral immune surveillance in liver. May mediate the endocytosis of pathogens which are subsequently degraded in lysosomal compartments. Probably recognizes in a calcium-dependent manner high mannose N-linked oligosaccharides in a variety of pathogen antigens. Is a receptor for ICAM3, probably by binding to mannose-like carbohydrates. This Macaca mulatta (Rhesus macaque) protein is CD209 antigen-like protein 2 (CD209L2).